The following is a 257-amino-acid chain: uncharacterized protein (257 aa).

The helical transmembrane segment at 6 to 26 (IFWLNLAAIIIISIVVSGGMF) threads the bilayer.

The protein belongs to the staphylococcal tandem lipoprotein family.

It is found in the cell membrane. This is an uncharacterized protein from Staphylococcus aureus (strain MSSA476).